The following is a 311-amino-acid chain: Methionyl-tRNA formyltransferase (311 aa).

Position 110 to 113 (110 to 113) interacts with (6S)-5,6,7,8-tetrahydrofolate; the sequence is SLLP.

It belongs to the Fmt family.

The catalysed reaction is L-methionyl-tRNA(fMet) + (6R)-10-formyltetrahydrofolate = N-formyl-L-methionyl-tRNA(fMet) + (6S)-5,6,7,8-tetrahydrofolate + H(+). In terms of biological role, attaches a formyl group to the free amino group of methionyl-tRNA(fMet). The formyl group appears to play a dual role in the initiator identity of N-formylmethionyl-tRNA by promoting its recognition by IF2 and preventing the misappropriation of this tRNA by the elongation apparatus. This is Methionyl-tRNA formyltransferase from Streptococcus agalactiae serotype Ia (strain ATCC 27591 / A909 / CDC SS700).